The primary structure comprises 151 residues: MRCPHCGNCDDKVMESRTLAQGDCIRRRRECLACGYRFTSYEHIEEKPFMVIKKDGRREPFDRKKLEKGIERALEKRPVSLNSIENIVTEIEDQAVLNSGLNKEIETTVLGEMVLSHLYSIDKVAYIRFASVYKQFSNLDEFVNEVKKVRK.

The segment at 3–34 is a zinc-finger region; it reads CPHCGNCDDKVMESRTLAQGDCIRRRRECLAC. In terms of domain architecture, ATP-cone spans 49-141; that stretch reads FMVIKKDGRR…VYKQFSNLDE (93 aa).

The protein belongs to the NrdR family. It depends on Zn(2+) as a cofactor.

In terms of biological role, negatively regulates transcription of bacterial ribonucleotide reductase nrd genes and operons by binding to NrdR-boxes. The sequence is that of Transcriptional repressor NrdR from Treponema denticola (strain ATCC 35405 / DSM 14222 / CIP 103919 / JCM 8153 / KCTC 15104).